Consider the following 463-residue polypeptide: Glutamate--tRNA ligase 2 (463 aa).

Positions 11-21 (PSPTGYLHIGG) match the 'HIGH' region motif. Positions 240–244 (KLSKR) match the 'KMSKS' region motif. Lys-243 contributes to the ATP binding site.

The protein belongs to the class-I aminoacyl-tRNA synthetase family. Glutamate--tRNA ligase type 1 subfamily. In terms of assembly, monomer.

It localises to the cytoplasm. It carries out the reaction tRNA(Glu) + L-glutamate + ATP = L-glutamyl-tRNA(Glu) + AMP + diphosphate. Functionally, catalyzes the attachment of glutamate to tRNA(Glu) in a two-step reaction: glutamate is first activated by ATP to form Glu-AMP and then transferred to the acceptor end of tRNA(Glu). This is Glutamate--tRNA ligase 2 from Campylobacter jejuni subsp. jejuni serotype O:6 (strain 81116 / NCTC 11828).